Consider the following 503-residue polypeptide: Long-chain-fatty-acid--CoA ligase FadD13 (503 aa).

It belongs to the ATP-dependent AMP-binding enzyme family. Homodimer.

The protein localises to the cell membrane. The catalysed reaction is a long-chain fatty acid + ATP + CoA = a long-chain fatty acyl-CoA + AMP + diphosphate. Its pathway is lipid metabolism; fatty acid biosynthesis. Its function is as follows. Required for maintaining the appropriate mycolic acid composition and permeability of the envelope on its exposure to acidic pH. Catalyzes the activation of long-chain fatty acids as acyl-coenzyme A (acyl-CoA), which are then transferred to the multifunctional polyketide synthase (PKS) type III for further chain extension. The chain is Long-chain-fatty-acid--CoA ligase FadD13 (fadD13) from Mycobacterium tuberculosis (strain CDC 1551 / Oshkosh).